The sequence spans 2729 residues: Protein NO VEIN (2729 aa).

The interval 1–27 is disordered; sequence MQGNHDGSWSLHPSTNNGSGRANGNIN. 2 consecutive short sequence motifs (nuclear localization signal) follow at residues 194 to 201 and 473 to 480; these read KRKVDVLR and MKRLGGSN. Disordered stretches follow at residues 477-517 and 2482-2515; these read GGSN…IPKL and LPSS…DVTE. Composition is skewed to basic and acidic residues over residues 488 to 497 and 2496 to 2515; these read RNHEKSDSSK and NTDD…DVTE.

In terms of tissue distribution, specifically expressed in developing embryos, leaf primordia, and shoot and root apical meristems.

The protein resides in the nucleus. Functionally, essential protein required for cell fate determination during embryogenesis. Mediates auxin-dependent coordinated cell-fate specification and patterning in embryos (e.g. cotyledon outgrowth and separation), shoots and roots (e.g. leaf vascular development, cellular patterning and stem cell maintenance in the meristems). Required for provascular PIN1 expression and region-specific expression of PIN7 in leaf primordia, cell type-specific expression of PIN3, PIN4, and PIN7 in the root, and PIN2 polarity in the root cortex. In Arabidopsis thaliana (Mouse-ear cress), this protein is Protein NO VEIN.